Reading from the N-terminus, the 473-residue chain is Ribulose bisphosphate carboxylase large chain (473 aa).

Residues asparagine 116 and threonine 166 each coordinate substrate. Residue lysine 168 is the Proton acceptor of the active site. Lysine 170 is a substrate binding site. 3 residues coordinate Mg(2+): lysine 194, aspartate 196, and glutamate 197. Position 194 is an N6-carboxylysine (lysine 194). Histidine 287 (proton acceptor) is an active-site residue. Substrate-binding residues include arginine 288, histidine 320, and serine 372.

Belongs to the RuBisCO large chain family. Type I subfamily. Heterohexadecamer of 8 large chains and 8 small chains. Requires Mg(2+) as cofactor.

It catalyses the reaction 2 (2R)-3-phosphoglycerate + 2 H(+) = D-ribulose 1,5-bisphosphate + CO2 + H2O. It carries out the reaction D-ribulose 1,5-bisphosphate + O2 = 2-phosphoglycolate + (2R)-3-phosphoglycerate + 2 H(+). Its function is as follows. RuBisCO catalyzes two reactions: the carboxylation of D-ribulose 1,5-bisphosphate, the primary event in carbon dioxide fixation, as well as the oxidative fragmentation of the pentose substrate. Both reactions occur simultaneously and in competition at the same active site. In Alkalilimnicola ehrlichii (strain ATCC BAA-1101 / DSM 17681 / MLHE-1), this protein is Ribulose bisphosphate carboxylase large chain.